Here is a 944-residue protein sequence, read N- to C-terminus: MSGMVDLKEFLAELGKTQKELKNVIEQAKDIGLELKTNSKMTPEQAGKLYKYIVDGIKEQIQANQPAKNPEQDNKDDLNTAVASKSLNKKVSKTPKKEETKSQPKPKKTKEKKKEAPTPIAKKKGGIEIVNTFENQTPPTENTPKVVSHSQIEKAKQKLQEIQKSREALNKLTQSNANNASNANNAKKEISEVKKQEQEIKRHENIKRRTGFRVIKRNDEVENESENSVTESKKPTQSAAAIFEDIKKEWQEKDKQEAKKAKKPSKPKATPTAKNNKSHKIDFSDARDFKGNDIYDDETDEILLFDLHEQDNFNKEEEEKEIRQNINDRVRVQRKNPWMNESGIKRQSKKKRAFRNDNSQKVIQSTTAIPEEVRVYEFAQKANLNLADVIKTLFNLGLMVTKNDFLDKDSIEILAEEFHLEISVQNTLEEFEVEEVLEGVKKERPPVVTIMGHVDHGKTSLLDKIRDKRVAHTEAGGITQHIGAYMVEKNDKWVSFIDTPGHEAFSQMRNRGAQVTDIAVIVIAADDGVKQQTIEALEHAKAANVPVIFAMNKMDKPNVNPDKLKAECAELGYNPVDWGGEHEFIPVSAKTGDGIDNLLETILIQAGIMELKAIEEGSARAVVLEGSVEKGRGAVATVIVQSGTLSVGDSFFAETAFGKVRTMTDDQGKSIQNLKPSMVALITGLSEVPPAGSVLIGVENDSIARLQAQKRATYLRQKALSKSTKVSFDELSEMVANKELKNIPVVIKADTQGSLEAIKNSLLELNNEEVAIQVIHSGVGGITENDLSLVSSSEHAVILGFNIRPTGNVKNKAKEYNVSIKTYTVIYALIEEMRSLLLGLMSPIIEEEHTGQAEVRETFNIPKVGTIAGCVVSDGVIARGIKARLIRDGVVIHTGEILSLKRFKDDVKEVSKGYECGIMLDNYNEIKVGDVFETYKEIHKKRTL.

2 disordered regions span residues 61–157 (IQAN…KAKQ) and 173–281 (TQSN…SHKI). Residues 132-150 (TFENQTPPTENTPKVVSHS) are compositionally biased toward polar residues. Residues 175–185 (SNANNASNANN) are compositionally biased toward low complexity. The segment covering 186–203 (AKKEISEVKKQEQEIKRH) has biased composition (basic and acidic residues). The span at 204–215 (ENIKRRTGFRVI) shows a compositional bias: basic residues. Residues 244–259 (EDIKKEWQEKDKQEAK) show a composition bias toward basic and acidic residues. The tr-type G domain occupies 443 to 612 (ERPPVVTIMG…LIQAGIMELK (170 aa)). Positions 452–459 (GHVDHGKT) are G1. Position 452–459 (452–459 (GHVDHGKT)) interacts with GTP. Residues 477–481 (GITQH) form a G2 region. The segment at 498–501 (DTPG) is G3. GTP-binding positions include 498–502 (DTPGH) and 552–555 (NKMD). A G4 region spans residues 552 to 555 (NKMD). Residues 588 to 590 (SAK) form a G5 region.

The protein belongs to the TRAFAC class translation factor GTPase superfamily. Classic translation factor GTPase family. IF-2 subfamily.

Its subcellular location is the cytoplasm. Functionally, one of the essential components for the initiation of protein synthesis. Protects formylmethionyl-tRNA from spontaneous hydrolysis and promotes its binding to the 30S ribosomal subunits. Also involved in the hydrolysis of GTP during the formation of the 70S ribosomal complex. In Helicobacter pylori (strain ATCC 700392 / 26695) (Campylobacter pylori), this protein is Translation initiation factor IF-2 (infB).